The primary structure comprises 209 residues: MKIVTTDSENKAVLYKVASEVEIPLTKTTKEKIEAMRIFYKSFQGKAGFAVPQVGLSERIILVEQHLFDTTMAEETDEPTILVNPSWRPISDKKEWDIEGCLSVPGKVGVVERYVHVELTAWLYHSDTEALSKIKREYHREYSSVLWQHEIDHLEGKIYVDKAKLLLNEKDFYSFRQQLIESGKIQSGMALFDLGPLIYDIVVKGEIPS.

Cysteine 101 and histidine 149 together coordinate Fe cation. Glutamate 150 is a catalytic residue. Position 153 (histidine 153) interacts with Fe cation.

This sequence belongs to the polypeptide deformylase family. Fe(2+) is required as a cofactor.

It catalyses the reaction N-terminal N-formyl-L-methionyl-[peptide] + H2O = N-terminal L-methionyl-[peptide] + formate. Removes the formyl group from the N-terminal Met of newly synthesized proteins. Requires at least a dipeptide for an efficient rate of reaction. N-terminal L-methionine is a prerequisite for activity but the enzyme has broad specificity at other positions. The protein is Peptide deformylase 2 of Coxiella burnetii (strain RSA 493 / Nine Mile phase I).